A 152-amino-acid chain; its full sequence is Deoxyuridine 5'-triphosphate nucleotidohydrolase (152 aa).

Substrate is bound by residues 71-73, asparagine 84, 88-90, and methionine 98; these read RSG and LID.

The protein belongs to the dUTPase family. The cofactor is Mg(2+).

The enzyme catalyses dUTP + H2O = dUMP + diphosphate + H(+). Its pathway is pyrimidine metabolism; dUMP biosynthesis; dUMP from dCTP (dUTP route): step 2/2. In terms of biological role, this enzyme is involved in nucleotide metabolism: it produces dUMP, the immediate precursor of thymidine nucleotides and it decreases the intracellular concentration of dUTP so that uracil cannot be incorporated into DNA. The sequence is that of Deoxyuridine 5'-triphosphate nucleotidohydrolase from Shewanella baltica (strain OS155 / ATCC BAA-1091).